Reading from the N-terminus, the 136-residue chain is Late embryogenesis abundant protein D-7 (136 aa).

Disordered stretches follow at residues 1-108 and 117-136; these read MASH…AQGA and GMAD…TRKD. The span at 11-58 shows a compositional bias: basic and acidic residues; that stretch reads GRAEGRAHEKGEQMKESMKEKAEAAKQKTMETAEAAKQKTMETAEAAK. 5 LEA 11-mer repeat repeats span residues 31–41, 42–52, 53–63, 64–74, and 75–85; these read KAEAAKQKTME, TAEAAKQKTME, TAEAAKQKTRG, AAETTNDKTKQ, and TAGAARGKAEE.

The protein belongs to the LEA type 4 family.

Functionally, LEA proteins are late embryonic proteins abundant in higher plant seed embryos. There are two subsets of LEA proteins (5a and 5b), the first ones are expressed when the cotyledon weight reach 80 mg and the second set are expressed above 100 mg. The function of those proteins is not known. The protein is Late embryogenesis abundant protein D-7 of Gossypium hirsutum (Upland cotton).